We begin with the raw amino-acid sequence, 809 residues long: Protein PHOX3 (809 aa).

A disordered region spans residues 1–22; it reads MEKQNEEISTDDAETSQSQLVD. TPR repeat units lie at residues 126-159, 164-199, 200-233, 235-265, and 274-311; these read AQGL…LPKD, SHVR…TPDH, NKAL…DPKN, MASE…PPDY, and AALW…EKKN. Residues 288–339 form a disordered region; sequence TKKSNQVEEKSEGEGEDVEPEKKNNVLAEKGKEKIKMKVKGKQSDKRSDTSK. Ser-298 bears the Phosphoserine mark. Residues 307-339 are compositionally biased toward basic and acidic residues; sequence PEKKNNVLAEKGKEKIKMKVKGKQSDKRSDTSK. Positions 359–438 constitute a PB1 domain; the sequence is NKDVKFVYSD…GTMRFYVVEV (80 aa). 3 TPR repeats span residues 508–541, 563–597, and 615–648; these read SEAM…SLLN, ESVS…KPEC, and SWYY…IKKS. The interval 656 to 686 is disordered; it reads ETGKESEPSQAGKTDCLTHEKDLGSSTQNNP. The stretch at 709–741 is one TPR 9 repeat; it reads SIMEYKLDQPFWRESLEAAMEKFELAGTCKDDV.

Functionally, carboxylate clamp type tetratricopeptide repeat protein that may act as a potential Hsp90/Hsp70 co-chaperone. Contributes to polar growth of root hairs. This Arabidopsis thaliana (Mouse-ear cress) protein is Protein PHOX3.